A 441-amino-acid polypeptide reads, in one-letter code: Ribulose bisphosphate carboxylase large chain (441 aa).

Lys-5 carries the post-translational modification N6,N6,N6-trimethyllysine. Asn-114 and Thr-164 together coordinate substrate. Catalysis depends on Lys-166, which acts as the Proton acceptor. Position 168 (Lys-168) interacts with substrate. Mg(2+)-binding residues include Lys-192, Asp-194, and Glu-195. Residue Lys-192 is modified to N6-carboxylysine. The Proton acceptor role is filled by His-285. Positions 286, 318, and 370 each coordinate substrate.

It belongs to the RuBisCO large chain family. Type I subfamily. In terms of assembly, heterohexadecamer of 8 large chains and 8 small chains; disulfide-linked. The disulfide link is formed within the large subunit homodimers. Mg(2+) serves as cofactor. In terms of processing, the disulfide bond which can form in the large chain dimeric partners within the hexadecamer appears to be associated with oxidative stress and protein turnover.

It is found in the plastid. The protein resides in the chloroplast. It catalyses the reaction 2 (2R)-3-phosphoglycerate + 2 H(+) = D-ribulose 1,5-bisphosphate + CO2 + H2O. It carries out the reaction D-ribulose 1,5-bisphosphate + O2 = 2-phosphoglycolate + (2R)-3-phosphoglycerate + 2 H(+). In terms of biological role, ruBisCO catalyzes two reactions: the carboxylation of D-ribulose 1,5-bisphosphate, the primary event in carbon dioxide fixation, as well as the oxidative fragmentation of the pentose substrate in the photorespiration process. Both reactions occur simultaneously and in competition at the same active site. The chain is Ribulose bisphosphate carboxylase large chain from Drosera dichrosepala (Rusty sundew).